The chain runs to 161 residues: Lipoprotein signal peptidase (161 aa).

A run of 4 helical transmembrane segments spans residues 8–28 (LKYF…KYLA), 40–60 (ITSF…SLLS), 67–87 (QMIM…YLII), and 91–111 (ITEK…LGNF). Residues Asp122 and Asp140 contribute to the active site. The helical transmembrane segment at 136–156 (FNIADSAITCGVVILIAASLF) threads the bilayer.

The protein belongs to the peptidase A8 family.

The protein localises to the cell inner membrane. It catalyses the reaction Release of signal peptides from bacterial membrane prolipoproteins. Hydrolyzes -Xaa-Yaa-Zaa-|-(S,diacylglyceryl)Cys-, in which Xaa is hydrophobic (preferably Leu), and Yaa (Ala or Ser) and Zaa (Gly or Ala) have small, neutral side chains.. The protein operates within protein modification; lipoprotein biosynthesis (signal peptide cleavage). In terms of biological role, this protein specifically catalyzes the removal of signal peptides from prolipoproteins. In Francisella tularensis subsp. novicida (strain U112), this protein is Lipoprotein signal peptidase.